The primary structure comprises 368 residues: Protein-glutamate methylesterase/protein-glutamine glutaminase (368 aa).

The region spanning 9–126 is the Response regulatory domain; sequence RVLVVDDSAF…SINMRELKDE (118 aa). At D60 the chain carries 4-aspartylphosphate. One can recognise a CheB-type methylesterase domain in the interval 161–354; that stretch reads SVPARIAVAI…ETVVRAVEMI (194 aa). Catalysis depends on residues S173, H200, and D296.

The protein belongs to the CheB family. Post-translationally, phosphorylated by CheA. Phosphorylation of the N-terminal regulatory domain activates the methylesterase activity.

It localises to the cytoplasm. It catalyses the reaction [protein]-L-glutamate 5-O-methyl ester + H2O = L-glutamyl-[protein] + methanol + H(+). It carries out the reaction L-glutaminyl-[protein] + H2O = L-glutamyl-[protein] + NH4(+). Functionally, involved in chemotaxis. Part of a chemotaxis signal transduction system that modulates chemotaxis in response to various stimuli. Catalyzes the demethylation of specific methylglutamate residues introduced into the chemoreceptors (methyl-accepting chemotaxis proteins or MCP) by CheR. Also mediates the irreversible deamidation of specific glutamine residues to glutamic acid. The protein is Protein-glutamate methylesterase/protein-glutamine glutaminase of Pyrococcus abyssi (strain GE5 / Orsay).